Here is a 712-residue protein sequence, read N- to C-terminus: Probable serine/threonine-protein kinase fhkE (712 aa).

The region spanning 46 to 100 (ITFGRLKDSTVHYNDKSISGSHCKITRESNDDDGVVIAFIYDNSTNGTFIDNIKV) is the FHA domain. The Protein kinase domain maps to 145-411 (YFIGEMLGQG…CNNIIQHPWF (267 aa)). ATP contacts are provided by residues 151 to 159 (LGQGNFATV) and Lys-174. Asp-270 serves as the catalytic Proton acceptor. Residues 414–442 (NVKLSTLLEEDERLRKKAEAEVEANNNNT) adopt a coiled-coil conformation. The disordered stretch occupies residues 431-695 (AEAEVEANNN…KCQYDPNCYR (265 aa)). Low complexity-rich tracts occupy residues 436–446 (EANNNNTNKSN), 459–481 (GNCSDSNNNNNSGSKSLSSIKSN), 514–571 (NNDN…SNDT), 595–605 (NLQNHLNNNKI), and 616–639 (NNNNNNNNNNNNNNNNNNNNNNNN). Polar residues predominate over residues 669-678 (PQNSSNNNSG).

This sequence belongs to the protein kinase superfamily. CAMK Ser/Thr protein kinase family. CHK2 subfamily.

The enzyme catalyses L-seryl-[protein] + ATP = O-phospho-L-seryl-[protein] + ADP + H(+). It carries out the reaction L-threonyl-[protein] + ATP = O-phospho-L-threonyl-[protein] + ADP + H(+). This Dictyostelium discoideum (Social amoeba) protein is Probable serine/threonine-protein kinase fhkE (fhkE).